A 302-amino-acid polypeptide reads, in one-letter code: MKVIKTLSIINFFIFVTFNIKNESKYSNTFINNAYNMSIRRSMEESKPPTGAVAGSGAGAGSGAGAVAGSGAGAVAGSGAGAVAGSGAGAVAGSGAGAVAGSGAGAVAGSGAGNGANPGADAERSPSTPATTTTTTTTNDAEASTSTSSENRNHNNAETNPKGKGEVQKPNQANKETQNNSNVQQDSQTKSNVPRTQDADTKSPTAQPEQAENSAPTAEQTESPELQSAPENKGTGQHGHMHGSRNNHPQNTSDSQKECTDGNKENCGAATSLLNNSSNIASINKFVVLISATLVLSFAIFI.

Positions M1 to I20 are cleaved as a signal peptide. N22 and N36 each carry an N-linked (GlcNAc...) asparagine glycan. The tract at residues E44–S228 is polymorphic region. A 1; partial repeat occupies G55–A60. The interval G55–G113 is 8 X 8 AA tandem repeats of G-S-G-A-G-A-V-A. Tandem repeats lie at residues G61–A68, G69–A76, G77–A84, G85–A92, G93–A100, and G101–A108. Residues G109–G113 form an 8; partial repeat. The tract at residues N114 to N263 is disordered. Over residues S125–E150 the composition is skewed to low complexity. The segment covering N151–V167 has biased composition (basic and acidic residues). Polar residues-rich tracts occupy residues K169–R195 and K202–P230. N179 is a glycosylation site (N-linked (GlcNAc...) asparagine). N251 is a glycosylation site (N-linked (GlcNAc...) asparagine). A disulfide bridge links C259 with C267. Residues N275 and N276 are each glycosylated (N-linked (GlcNAc...) asparagine). N276 carries GPI-anchor amidated asparagine lipidation. A propeptide spans S277 to I302 (removed in mature form).

It localises to the cell membrane. Its function is as follows. May play a role in the merozoite attachment to the erythrocyte. The sequence is that of Merozoite surface protein 2 from Plasmodium falciparum (isolate tak 9).